Consider the following 754-residue polypeptide: 5-methyltetrahydropteroyltriglutamate--homocysteine methyltransferase (754 aa).

Residues 15 to 18 and Lys-114 each bind 5-methyltetrahydropteroyltri-L-glutamate; that span reads RELK. L-homocysteine contacts are provided by residues 430 to 432 and Glu-483; that span reads IGS. L-methionine is bound by residues 430 to 432 and Glu-483; that span reads IGS. Residues 514-515 and Trp-560 contribute to the 5-methyltetrahydropteroyltri-L-glutamate site; that span reads RC. Asp-598 is a binding site for L-homocysteine. Asp-598 contributes to the L-methionine binding site. Glu-604 contributes to the 5-methyltetrahydropteroyltri-L-glutamate binding site. The Zn(2+) site is built by His-641, Cys-643, and Glu-665. The Proton donor role is filled by His-694. Cys-726 contacts Zn(2+).

This sequence belongs to the vitamin-B12 independent methionine synthase family. Zn(2+) serves as cofactor.

It catalyses the reaction 5-methyltetrahydropteroyltri-L-glutamate + L-homocysteine = tetrahydropteroyltri-L-glutamate + L-methionine. The protein operates within amino-acid biosynthesis; L-methionine biosynthesis via de novo pathway; L-methionine from L-homocysteine (MetE route): step 1/1. In terms of biological role, catalyzes the transfer of a methyl group from 5-methyltetrahydrofolate to homocysteine resulting in methionine formation. This is 5-methyltetrahydropteroyltriglutamate--homocysteine methyltransferase from Campylobacter jejuni subsp. jejuni serotype O:6 (strain 81116 / NCTC 11828).